The sequence spans 1012 residues: PHD finger protein 20 (1012 aa).

Tudor domains follow at residues 4 to 69 and 83 to 147; these read HPPN…RPLE and GSSE…GNAR. Residues 142 to 336 are disordered; that stretch reads IVGNARPKET…RSSRLSTNGT (195 aa). A compositionally biased stretch (basic and acidic residues) spans 147 to 245; sequence RPKETDHKSL…QVDKKPENDI (99 aa). Ser159 bears the Phosphoserine mark. The segment at residues 257 to 269 is a DNA-binding region (a.T hook); sequence KRKRGRPPSIAPT. Polar residues predominate over residues 271–280; sequence VDSNSQTLQP. Over residues 297-325 the composition is skewed to basic and acidic residues; that stretch reads PLKRPRLDKNSSQEKSKNYSENTDKDLSR. Residues 452–477 form a C2H2-type zinc finger; it reads FRCKVVDCLKFFRKAKLLHYHMKYFH. Residues 481 to 490 are compositionally biased toward basic and acidic residues; the sequence is KSLEPEESPG. Residues 481-611 are disordered; sequence KSLEPEESPG…KGKVKALEED (131 aa). The residue at position 488 (Ser488) is a Phosphoserine. Polar residues predominate over residues 497–509; the sequence is RGPSASDKPSQET. The segment covering 522–538 has biased composition (basic and acidic residues); it reads TKDKEKNKEKKFKEFVR. A compositionally biased stretch (basic residues) spans 539-551; the sequence is VKPKKKKKKKKKT. The segment at 654-700 adopts a PHD-type zinc-finger fold; the sequence is RCICEVQEENDFMIQCEECQCWQHGVCMGLLEENVPEKYTCYVCQDP. Lys843 is modified (N6-acetyllysine). The interval 866 to 912 is disordered; that stretch reads DAVNPLHENGDDSLSPRLGWPLDQDRSKGDSDPKPGSPKVKEYVSKK. A phosphoserine mark is found at Ser878 and Ser880. The span at 888–912 shows a compositional bias: basic and acidic residues; that stretch reads DQDRSKGDSDPKPGSPKVKEYVSKK.

In terms of assembly, homodimer; disulfide-linked. Component of some MLL1/MLL complex, at least composed of the core components KMT2A/MLL1, ASH2L, HCFC1, WDR5 and RBBP5, as well as the facultative components BACC1, CHD8, E2F6, HSP70, INO80C, KANSL1, LAS1L, MAX, MCRS1, MGA, KAT8/MOF, PELP1, PHF20, PRP31, RING2, RUVB1/TIP49A, RUVB2/TIP49B, SENP3, TAF1, TAF4, TAF6, TAF7, TAF9 and TEX10. Component of the NSL complex at least composed of MOF/KAT8, KANSL1, KANSL2, KANSL3, MCRS1, PHF20, OGT1/OGT, WDR5 and HCFC1. Post-translationally, ubiquitinated by TRIM26; leading to proteasomal degradation. In terms of tissue distribution, expressed in heart, kidney, liver, lung, pancreas, placenta, spleen and testis. Not expressed in brain, skeletal muscle, colon, ovary, prostate, small intestine and thymus. Expressed in colon and ovary cancer cell lines while it is not expressed in the respective normal tissues.

Its subcellular location is the nucleus. In terms of biological role, methyllysine-binding protein, component of the MOF histone acetyltransferase protein complex. Not required for maintaining the global histone H4 'Lys-16' acetylation (H4K16ac) levels or locus specific histone acetylation, but instead works downstream in transcriptional regulation of MOF target genes. As part of the NSL complex it may be involved in acetylation of nucleosomal histone H4 on several lysine residues. Contributes to methyllysine-dependent p53/TP53 stabilization and up-regulation after DNA damage. This chain is PHD finger protein 20 (PHF20), found in Homo sapiens (Human).